We begin with the raw amino-acid sequence, 236 residues long: MTKKEMLYEGKGKKLFKTDDENLLISEFKDDLTAFNAEKRGNESGKGALNCRISTEIFHLLEKNGIKTHLVETISDTEQVVKKCKIVPIEVIVRNVATGSLTKRLGIKDGTVLPFALVEFCLKDDALGDPFINDEHCLILNLVQNEAQISEIKNMARKINSILTPFFDNKNLRLIDFKIELGLTKDNELVLADEISPDSCRFWDKFSNEKLDKDRFRQDLGNVKMAYEEVLKRILN.

Belongs to the SAICAR synthetase family.

The enzyme catalyses 5-amino-1-(5-phospho-D-ribosyl)imidazole-4-carboxylate + L-aspartate + ATP = (2S)-2-[5-amino-1-(5-phospho-beta-D-ribosyl)imidazole-4-carboxamido]succinate + ADP + phosphate + 2 H(+). It functions in the pathway purine metabolism; IMP biosynthesis via de novo pathway; 5-amino-1-(5-phospho-D-ribosyl)imidazole-4-carboxamide from 5-amino-1-(5-phospho-D-ribosyl)imidazole-4-carboxylate: step 1/2. The protein is Phosphoribosylaminoimidazole-succinocarboxamide synthase of Campylobacter jejuni (strain RM1221).